Reading from the N-terminus, the 421-residue chain is UDP-N-acetylglucosamine 1-carboxyvinyltransferase 1 (421 aa).

Phosphoenolpyruvate is bound at residue 22–23; it reads KN. R95 provides a ligand contact to UDP-N-acetyl-alpha-D-glucosamine. The Proton donor role is filled by C119. C119 carries the post-translational modification 2-(S-cysteinyl)pyruvic acid O-phosphothioketal. UDP-N-acetyl-alpha-D-glucosamine contacts are provided by residues 124–128, D308, and V330; that span reads RPIEQ.

Belongs to the EPSP synthase family. MurA subfamily.

It is found in the cytoplasm. The catalysed reaction is phosphoenolpyruvate + UDP-N-acetyl-alpha-D-glucosamine = UDP-N-acetyl-3-O-(1-carboxyvinyl)-alpha-D-glucosamine + phosphate. Its pathway is cell wall biogenesis; peptidoglycan biosynthesis. Cell wall formation. Adds enolpyruvyl to UDP-N-acetylglucosamine. The protein is UDP-N-acetylglucosamine 1-carboxyvinyltransferase 1 of Staphylococcus aureus (strain bovine RF122 / ET3-1).